Here is a 338-residue protein sequence, read N- to C-terminus: Ketol-acid reductoisomerase (NADP(+)) (338 aa).

The KARI N-terminal Rossmann domain occupies 1 to 181 (MKVFYDKDCD…GGGRAGIIET (181 aa)). NADP(+) contacts are provided by residues 24–27 (YGSQ), R47, and S52. H107 is an active-site residue. Residue G133 coordinates NADP(+). Residues 182 to 327 (NFREETETDL…AKLRAMMPWI (146 aa)) enclose the KARI C-terminal knotted domain. Mg(2+)-binding residues include D190, E194, E226, and E230. S251 contacts substrate.

This sequence belongs to the ketol-acid reductoisomerase family. Mg(2+) serves as cofactor.

The catalysed reaction is (2R)-2,3-dihydroxy-3-methylbutanoate + NADP(+) = (2S)-2-acetolactate + NADPH + H(+). It carries out the reaction (2R,3R)-2,3-dihydroxy-3-methylpentanoate + NADP(+) = (S)-2-ethyl-2-hydroxy-3-oxobutanoate + NADPH + H(+). Its pathway is amino-acid biosynthesis; L-isoleucine biosynthesis; L-isoleucine from 2-oxobutanoate: step 2/4. It participates in amino-acid biosynthesis; L-valine biosynthesis; L-valine from pyruvate: step 2/4. Its function is as follows. Involved in the biosynthesis of branched-chain amino acids (BCAA). Catalyzes an alkyl-migration followed by a ketol-acid reduction of (S)-2-acetolactate (S2AL) to yield (R)-2,3-dihydroxy-isovalerate. In the isomerase reaction, S2AL is rearranged via a Mg-dependent methyl migration to produce 3-hydroxy-3-methyl-2-ketobutyrate (HMKB). In the reductase reaction, this 2-ketoacid undergoes a metal-dependent reduction by NADPH to yield (R)-2,3-dihydroxy-isovalerate. The protein is Ketol-acid reductoisomerase (NADP(+)) of Herminiimonas arsenicoxydans.